The sequence spans 169 residues: Peptide methionine sulfoxide reductase MsrA (169 aa).

The active site involves Cys-11.

This sequence belongs to the MsrA Met sulfoxide reductase family.

The enzyme catalyses L-methionyl-[protein] + [thioredoxin]-disulfide + H2O = L-methionyl-(S)-S-oxide-[protein] + [thioredoxin]-dithiol. It catalyses the reaction [thioredoxin]-disulfide + L-methionine + H2O = L-methionine (S)-S-oxide + [thioredoxin]-dithiol. In terms of biological role, has an important function as a repair enzyme for proteins that have been inactivated by oxidation. Catalyzes the reversible oxidation-reduction of methionine sulfoxide in proteins to methionine. This chain is Peptide methionine sulfoxide reductase MsrA, found in Leifsonia xyli subsp. xyli (strain CTCB07).